Here is a 399-residue protein sequence, read N- to C-terminus: CCA-adding enzyme (399 aa).

Residues Gly33 and Arg36 each coordinate ATP. CTP is bound by residues Gly33 and Arg36. Mg(2+) contacts are provided by Asp46 and Asp48. Residues Arg117, Asp160, Arg163, Arg166, and Arg169 each coordinate ATP. Residues Arg117, Asp160, Arg163, Arg166, and Arg169 each contribute to the CTP site.

This sequence belongs to the tRNA nucleotidyltransferase/poly(A) polymerase family. Bacterial CCA-adding enzyme type 3 subfamily. Homodimer. Mg(2+) serves as cofactor.

It carries out the reaction a tRNA precursor + 2 CTP + ATP = a tRNA with a 3' CCA end + 3 diphosphate. The catalysed reaction is a tRNA with a 3' CCA end + 2 CTP + ATP = a tRNA with a 3' CCACCA end + 3 diphosphate. Catalyzes the addition and repair of the essential 3'-terminal CCA sequence in tRNAs without using a nucleic acid template. Adds these three nucleotides in the order of C, C, and A to the tRNA nucleotide-73, using CTP and ATP as substrates and producing inorganic pyrophosphate. tRNA 3'-terminal CCA addition is required both for tRNA processing and repair. Also involved in tRNA surveillance by mediating tandem CCA addition to generate a CCACCA at the 3' terminus of unstable tRNAs. While stable tRNAs receive only 3'-terminal CCA, unstable tRNAs are marked with CCACCA and rapidly degraded. In Lactobacillus helveticus (strain DPC 4571), this protein is CCA-adding enzyme.